Consider the following 150-residue polypeptide: UPF0178 protein Maqu_2186 (150 aa).

It belongs to the UPF0178 family.

The chain is UPF0178 protein Maqu_2186 from Marinobacter nauticus (strain ATCC 700491 / DSM 11845 / VT8) (Marinobacter aquaeolei).